A 410-amino-acid polypeptide reads, in one-letter code: Arginine deiminase (410 aa).

Cys-398 functions as the Amidino-cysteine intermediate in the catalytic mechanism.

The protein belongs to the arginine deiminase family. In terms of assembly, homodimer.

The protein resides in the cytoplasm. The catalysed reaction is L-arginine + H2O = L-citrulline + NH4(+). It functions in the pathway amino-acid degradation; L-arginine degradation via ADI pathway; carbamoyl phosphate from L-arginine: step 1/2. This Mycoplasmopsis arginini (Mycoplasma arginini) protein is Arginine deiminase (arcA).